Reading from the N-terminus, the 483-residue chain is Aspartyl/glutamyl-tRNA(Asn/Gln) amidotransferase subunit B (483 aa).

It belongs to the GatB/GatE family. GatB subfamily. Heterotrimer of A, B and C subunits.

The catalysed reaction is L-glutamyl-tRNA(Gln) + L-glutamine + ATP + H2O = L-glutaminyl-tRNA(Gln) + L-glutamate + ADP + phosphate + H(+). It carries out the reaction L-aspartyl-tRNA(Asn) + L-glutamine + ATP + H2O = L-asparaginyl-tRNA(Asn) + L-glutamate + ADP + phosphate + 2 H(+). Its function is as follows. Allows the formation of correctly charged Asn-tRNA(Asn) or Gln-tRNA(Gln) through the transamidation of misacylated Asp-tRNA(Asn) or Glu-tRNA(Gln) in organisms which lack either or both of asparaginyl-tRNA or glutaminyl-tRNA synthetases. The reaction takes place in the presence of glutamine and ATP through an activated phospho-Asp-tRNA(Asn) or phospho-Glu-tRNA(Gln). The protein is Aspartyl/glutamyl-tRNA(Asn/Gln) amidotransferase subunit B of Rickettsia rickettsii (strain Iowa).